Reading from the N-terminus, the 216-residue chain is Phosphoribosylaminoimidazole-succinocarboxamide synthase (216 aa).

This sequence belongs to the SAICAR synthetase family.

The enzyme catalyses 5-amino-1-(5-phospho-D-ribosyl)imidazole-4-carboxylate + L-aspartate + ATP = (2S)-2-[5-amino-1-(5-phospho-beta-D-ribosyl)imidazole-4-carboxamido]succinate + ADP + phosphate + 2 H(+). It functions in the pathway purine metabolism; IMP biosynthesis via de novo pathway; 5-amino-1-(5-phospho-D-ribosyl)imidazole-4-carboxamide from 5-amino-1-(5-phospho-D-ribosyl)imidazole-4-carboxylate: step 1/2. The polypeptide is Phosphoribosylaminoimidazole-succinocarboxamide synthase (purC) (Aquifex aeolicus (strain VF5)).